A 201-amino-acid polypeptide reads, in one-letter code: Protein ripply1 (201 aa).

Residues methionine 1–alanine 29 form a disordered region. Low complexity predominate over residues proline 15–alanine 29. The WRPW motif signature appears at alanine 57–tryptophan 60. The tract at residues histidine 99–tyrosine 134 is ripply homology domain. Positions aspartate 136–proline 174 are enriched in acidic residues. The interval aspartate 136–asparagine 201 is disordered.

Belongs to the ripply family. As to expression, expressed in the anterior presomitic mesoderm and somites of stage E9.5 dpc embryos. Also expressed in tongue, diaphragm and intercostal muscles at 16.5 dpc.

It is found in the nucleus. Functionally, plays a role in somitogenesis. Essential for transcriptional repression of the segmental patterning genes, thus terminating the segmentation program in the presomitic mesoderm, and also required for the maintenance of rostrocaudal polarity in somites. The polypeptide is Protein ripply1 (Mus musculus (Mouse)).